Reading from the N-terminus, the 245-residue chain is tRNA1(Val) (adenine(37)-N6)-methyltransferase (245 aa).

The protein belongs to the methyltransferase superfamily. tRNA (adenine-N(6)-)-methyltransferase family.

The protein resides in the cytoplasm. The enzyme catalyses adenosine(37) in tRNA1(Val) + S-adenosyl-L-methionine = N(6)-methyladenosine(37) in tRNA1(Val) + S-adenosyl-L-homocysteine + H(+). Its function is as follows. Specifically methylates the adenine in position 37 of tRNA(1)(Val) (anticodon cmo5UAC). In Escherichia coli (strain SE11), this protein is tRNA1(Val) (adenine(37)-N6)-methyltransferase.